A 373-amino-acid polypeptide reads, in one-letter code: SWI/SNF-related matrix-associated actin-dependent regulator of chromatin subfamily B member 1 (373 aa).

Residues 1-101 (MALSKAFGQK…DEKYKAVSIS (101 aa)) form a DNA-binding region.

It belongs to the SNF5 family. Component of the multiprotein chromatin-remodeling complexes SWI/SNF. Component of neural progenitors-specific chromatin remodeling complex (npBAF complex) and the neuron-specific chromatin remodeling complex (nBAF complex). Component of the BAF (SWI/SNF) chromatin remodeling complex. Component of the SWI/SNF-B (PBAF) chromatin remodeling complex. Binds to double-stranded DNA.

The protein resides in the nucleus. Its function is as follows. Involved in chromatin-remodeling. Core component of the BAF (SWI/SNF) complex. This ATP-dependent chromatin-remodeling complex plays important roles in cell proliferation and differentiation, in cellular antiviral activities and inhibition of tumor formation. Belongs to the neural progenitors-specific chromatin remodeling complex (npBAF complex) and the neuron-specific chromatin remodeling complex (nBAF complex) and may play a role in neural development. The sequence is that of SWI/SNF-related matrix-associated actin-dependent regulator of chromatin subfamily B member 1 (smarcb1) from Dichotomyctere fluviatilis (Green pufferfish).